A 431-amino-acid polypeptide reads, in one-letter code: Serine hydroxymethyltransferase 1 (431 aa).

(6S)-5,6,7,8-tetrahydrofolate contacts are provided by residues Leu127 and 131 to 133 (GHL). Lys236 carries the post-translational modification N6-(pyridoxal phosphate)lysine. Position 252 (Glu252) interacts with (6S)-5,6,7,8-tetrahydrofolate.

It belongs to the SHMT family. In terms of assembly, homodimer. The cofactor is pyridoxal 5'-phosphate.

It localises to the cytoplasm. The enzyme catalyses (6R)-5,10-methylene-5,6,7,8-tetrahydrofolate + glycine + H2O = (6S)-5,6,7,8-tetrahydrofolate + L-serine. It functions in the pathway one-carbon metabolism; tetrahydrofolate interconversion. It participates in amino-acid biosynthesis; glycine biosynthesis; glycine from L-serine: step 1/1. Its function is as follows. Catalyzes the reversible interconversion of serine and glycine with tetrahydrofolate (THF) serving as the one-carbon carrier. This reaction serves as the major source of one-carbon groups required for the biosynthesis of purines, thymidylate, methionine, and other important biomolecules. Also exhibits THF-independent aldolase activity toward beta-hydroxyamino acids, producing glycine and aldehydes, via a retro-aldol mechanism. The sequence is that of Serine hydroxymethyltransferase 1 from Rhizobium meliloti (strain 1021) (Ensifer meliloti).